The primary structure comprises 276 residues: Ribosomal RNA small subunit methyltransferase A (276 aa).

H15, L17, G42, E64, D89, and N108 together coordinate S-adenosyl-L-methionine.

Belongs to the class I-like SAM-binding methyltransferase superfamily. rRNA adenine N(6)-methyltransferase family. RsmA subfamily.

The protein resides in the cytoplasm. It catalyses the reaction adenosine(1518)/adenosine(1519) in 16S rRNA + 4 S-adenosyl-L-methionine = N(6)-dimethyladenosine(1518)/N(6)-dimethyladenosine(1519) in 16S rRNA + 4 S-adenosyl-L-homocysteine + 4 H(+). Specifically dimethylates two adjacent adenosines (A1518 and A1519) in the loop of a conserved hairpin near the 3'-end of 16S rRNA in the 30S particle. May play a critical role in biogenesis of 30S subunits. This Prochlorococcus marinus (strain MIT 9515) protein is Ribosomal RNA small subunit methyltransferase A.